A 156-amino-acid chain; its full sequence is Ribosomal RNA large subunit methyltransferase H (156 aa).

Residues Leu-73, Gly-104, and 123–128 (LSSLTL) each bind S-adenosyl-L-methionine.

Belongs to the RNA methyltransferase RlmH family. As to quaternary structure, homodimer.

It is found in the cytoplasm. The catalysed reaction is pseudouridine(1915) in 23S rRNA + S-adenosyl-L-methionine = N(3)-methylpseudouridine(1915) in 23S rRNA + S-adenosyl-L-homocysteine + H(+). Functionally, specifically methylates the pseudouridine at position 1915 (m3Psi1915) in 23S rRNA. This is Ribosomal RNA large subunit methyltransferase H from Neisseria gonorrhoeae (strain ATCC 700825 / FA 1090).